The following is a 528-amino-acid chain: Drimenol cyclase drtB (528 aa).

This sequence belongs to the HAD-like hydrolase superfamily.

It catalyses the reaction (2E,6E)-farnesyl diphosphate + H2O = (5S,9S,10S)-drim-7-en-11-ol + diphosphate. It participates in secondary metabolite biosynthesis; terpenoid biosynthesis. Functionally, drimenol cyclase; part of the gene cluster that mediates the biosynthesis of various drimane-type sesquiterpene esters, compounds that exhibit diverse biological activities and are widely present in eukaryotes. The pathway begins with the synthesis of the backbone drimenol by the terpene cyclase drtB using farnesyl pyrophosphate (FPP) as substrate. The cytochrome P450 monooxygenase drtD is then responsible for the hydroxylations at C-6, C-9 and C-12, as well as the oxidation of hydroxyl groups at C-6 and C-11 to a ketone and an aldehyde, respectively. Then, the biosynthesis can go in two directions, either the hydroxylated drimenol is further hydroxylated at C-2 and C-3 by an enzyme(s) not associated with the drt cluster, or the FAD-binding oxidoreductase drtC further oxidizes C-11 or C-12 to form the butyrolactone ring. DrtB, drtD and drtC are solely responsible for the formation of the different drimane structures observed during drimane sesquiterpenes biosynthesis. The polyketide synthase drtA synthesizes different lengths (C6 and C8) of PKS chains, which are then oxidized to varying degrees by the short-chain dehydrogenase drtF. Finally, these PKS chains are transferred onto drimane sesquiterpenes by the acyltransferase drtE, forming the sesquiterpene esters. In addition to the different fatty acyl-CoA chains produced by drtA, drtE is also able to use cinnamoyl-CoA as a substrate. In Aspergillus calidoustus, this protein is Drimenol cyclase drtB.